We begin with the raw amino-acid sequence, 212 residues long: ER lumen protein-retaining receptor 2 (212 aa).

Over 1-4 the chain is Lumenal; the sequence is MNIF. A helical membrane pass occupies residues 5 to 24; sequence RLTGDLSHLAAIVILLLKIW. Over 25 to 32 the chain is Cytoplasmic; the sequence is KTRSCAGI. Residues 33–52 form a helical membrane-spanning segment; that stretch reads SGKSQLLFALVFTTRYLDLF. The tract at residues 47–48 is interaction with the K-D-E-L motif on target proteins; the sequence is RY. Topologically, residues 53 to 58 are lumenal; sequence TSFISL. A helical membrane pass occupies residues 59–79; it reads YNTSMKLIYIACSYATVYLIY. Over 80 to 92 the chain is Cytoplasmic; that stretch reads MKFKATYDGNHDT. The chain crosses the membrane as a helical span at residues 93 to 110; that stretch reads FRVEFLVVPVGGLSFLVN. Residues 111 to 116 are Lumenal-facing; the sequence is HDFSPL. A helical transmembrane segment spans residues 117-135; the sequence is EILWTFSIYLESVAILPQL. Residues 136 to 149 lie on the Cytoplasmic side of the membrane; that stretch reads FMISKTGEAETITT. A helical membrane pass occupies residues 150-168; the sequence is HYLFFLGLYRALYLVNWIW. Residues 159–169 form an interaction with the K-D-E-L motif on target proteins region; sequence RALYLVNWIWR. Residues 169 to 178 are Lumenal-facing; sequence RFYFEGFFDL. A helical transmembrane segment spans residues 179 to 199; the sequence is IAVVAGVVQTILYCDFFYLYI. Residues 200–212 are Cytoplasmic-facing; the sequence is TKVLKGKKLSLPA. The important for recycling of cargo proteins with the sequence motif K-D-E-L from the Golgi to the endoplasmic reticulum stretch occupies residues 204 to 207; sequence KGKK.

It belongs to the ERD2 family.

It localises to the endoplasmic reticulum membrane. The protein resides in the golgi apparatus membrane. It is found in the cytoplasmic vesicle. Its subcellular location is the COPI-coated vesicle membrane. Membrane receptor that binds the K-D-E-L sequence motif in the C-terminal part of endoplasmic reticulum resident proteins and maintains their localization in that compartment by participating to their vesicle-mediated recycling back from the Golgi. Binding is pH dependent, and is optimal at pH 5-5.4. The polypeptide is ER lumen protein-retaining receptor 2 (Kdelr2) (Mus musculus (Mouse)).